The sequence spans 158 residues: Cyclic pyranopterin monophosphate synthase (158 aa).

Residues 75 to 77 and 113 to 114 contribute to the substrate site; these read LCH and ME. Aspartate 128 is a catalytic residue.

Belongs to the MoaC family. As to quaternary structure, homohexamer; trimer of dimers.

It catalyses the reaction (8S)-3',8-cyclo-7,8-dihydroguanosine 5'-triphosphate = cyclic pyranopterin phosphate + diphosphate. It functions in the pathway cofactor biosynthesis; molybdopterin biosynthesis. Catalyzes the conversion of (8S)-3',8-cyclo-7,8-dihydroguanosine 5'-triphosphate to cyclic pyranopterin monophosphate (cPMP). The polypeptide is Cyclic pyranopterin monophosphate synthase (Vibrio campbellii (strain ATCC BAA-1116)).